A 447-amino-acid chain; its full sequence is MAAAAIGEANLAQFGRAQRVIPGGVNSPVRAFRSVGGTPRFMVFANGPYIVDAEGREYVDLVASWGPAILGHAHPAVVSAVQEAAARGLSFGASTPAETELAEAVIARVPFVEKLRLVSTGTEATMTAIRLARGFTGRPLLIKFAGHYHGHSDSLLAEAGSGLATLSLPGSAGVTEATAAQTLVLPYNDLGAVRAVFEANGPDIAAVIAEAAAANMGVVPPDEGFNAALTDLAHEYGALLILDEVLTGFRVSEAGFWGLDRGYTPDLVAFGKVIGGGMPLAAVGGRAELMDILAPAGPVYQAGTLSGNPVAVAAGLATLAHAGEAVYDRLDIVAGTLSAAVSDALTAEGVAHSVQRAGNLFSFVFGDVAAAPRTFAEVQRQEAFRYRAFFHAMLDAGVSLPPSVFEAWFVTAAHDDAAVGRVLEALPAAARAAASACPGRPLLFVRR.

An N6-(pyridoxal phosphate)lysine modification is found at K272.

The protein belongs to the class-III pyridoxal-phosphate-dependent aminotransferase family. HemL subfamily. As to quaternary structure, homodimer. Requires pyridoxal 5'-phosphate as cofactor.

Its subcellular location is the cytoplasm. It catalyses the reaction (S)-4-amino-5-oxopentanoate = 5-aminolevulinate. Its pathway is porphyrin-containing compound metabolism; protoporphyrin-IX biosynthesis; 5-aminolevulinate from L-glutamyl-tRNA(Glu): step 2/2. This Leifsonia xyli subsp. xyli (strain CTCB07) protein is Glutamate-1-semialdehyde 2,1-aminomutase.